Consider the following 661-residue polypeptide: UvrABC system protein B (661 aa).

One can recognise a Helicase ATP-binding domain in the interval 25–182 (AGLNSKKRSQ…SDLVNLQYER (158 aa)). Position 38–45 (38–45 (GITGSGKT)) interacts with ATP. The Beta-hairpin motif lies at 91–114 (YYDYYQPEAYIARTDTFIEKDSSI). One can recognise a Helicase C-terminal domain in the interval 430–592 (QVEDLISEIQ…IIPQTINRTI (163 aa)). Positions 621-656 (KAHIYKLKKAMLKAASNLEFEQATKLRDQLKNLEEA) constitute a UVR domain.

This sequence belongs to the UvrB family. In terms of assembly, forms a heterotetramer with UvrA during the search for lesions. Interacts with UvrC in an incision complex.

The protein localises to the cytoplasm. The UvrABC repair system catalyzes the recognition and processing of DNA lesions. A damage recognition complex composed of 2 UvrA and 2 UvrB subunits scans DNA for abnormalities. Upon binding of the UvrA(2)B(2) complex to a putative damaged site, the DNA wraps around one UvrB monomer. DNA wrap is dependent on ATP binding by UvrB and probably causes local melting of the DNA helix, facilitating insertion of UvrB beta-hairpin between the DNA strands. Then UvrB probes one DNA strand for the presence of a lesion. If a lesion is found the UvrA subunits dissociate and the UvrB-DNA preincision complex is formed. This complex is subsequently bound by UvrC and the second UvrB is released. If no lesion is found, the DNA wraps around the other UvrB subunit that will check the other stand for damage. The protein is UvrABC system protein B of Rickettsia canadensis (strain McKiel).